Here is a 344-residue protein sequence, read N- to C-terminus: Estradiol 17-beta-dehydrogenase 1 (344 aa).

Ser3–Lys32 serves as a coordination point for NAD(+). Ser143 contacts substrate. Catalysis depends on Tyr156, which acts as the Proton acceptor.

It belongs to the short-chain dehydrogenases/reductases (SDR) family. Homodimer.

It is found in the cytoplasm. It carries out the reaction 17beta-estradiol + NAD(+) = estrone + NADH + H(+). It catalyses the reaction 17beta-estradiol + NADP(+) = estrone + NADPH + H(+). It functions in the pathway steroid biosynthesis; estrogen biosynthesis. Its function is as follows. Favors the reduction of estrogens and androgens. Uses preferentially NADH. This Rattus norvegicus (Rat) protein is Estradiol 17-beta-dehydrogenase 1 (Hsd17b1).